The sequence spans 566 residues: E3 ubiquitin-protein ligase RNF220 (566 aa).

K277 participates in a covalent cross-link: Glycyl lysine isopeptide (Lys-Gly) (interchain with G-Cter in SUMO2). The tract at residues 277 to 297 is disordered; that stretch reads KREGESPTASPHSSATDDLHH. At S390 the chain carries Phosphoserine. The stretch at 485–513 forms a coiled coil; sequence EDSAVTTFEALKARVRELERQLSRGDRYK. The segment at 514-522 is required for targeting to the cytoplasm; the sequence is CLICMDSYS. The RING-type zinc finger occupies 514-553; it reads CLICMDSYSMPLTSIQCWHVHCEECWLRTLGAKKLCPQCY.

As to quaternary structure, interacts with SIN3B. Interacts with CTNNB1 (via Armadillo repeats 2-8). Interacts with USP7 (via MATH domain). In terms of processing, auto-ubiquitinated; leads to proteasomal degradation.

The protein localises to the cytoplasm. The enzyme catalyses S-ubiquitinyl-[E2 ubiquitin-conjugating enzyme]-L-cysteine + [acceptor protein]-L-lysine = [E2 ubiquitin-conjugating enzyme]-L-cysteine + N(6)-ubiquitinyl-[acceptor protein]-L-lysine.. Its pathway is protein modification; protein ubiquitination. Its function is as follows. E3 ubiquitin-protein ligase that promotes the ubiquitination and proteasomal degradation of SIN3B. Independently of its E3 ligase activity, acts as a CTNNB1 stabilizer through USP7-mediated deubiquitination of CTNNB1 promoting Wnt signaling. This Bos taurus (Bovine) protein is E3 ubiquitin-protein ligase RNF220 (RNF220).